A 235-amino-acid polypeptide reads, in one-letter code: MKHEEANKEIGGRGAEGQRSKRVGGNSKIQNIQSPAPNPQPIVPNTQSPVPNLDNWLEIGKIVSPQGLSGELKVYPVSDFPERFEVPGKRWLLHLDGTEPQPIQLLTGRYISNKNLYVIKLAGVENCDQAEALRGCKLMVPASDRPQLAEDEYHVLDLIGLEVFMQASGELVGTVVDIIPAGNDLLEVKLHPSFTTDKKQKTVLIPFVEAIAPVVDLKSNRIEITPPPGLLEINN.

A compositionally biased stretch (basic and acidic residues) spans 1–19 (MKHEEANKEIGGRGAEGQR). The interval 1 to 49 (MKHEEANKEIGGRGAEGQRSKRVGGNSKIQNIQSPAPNPQPIVPNTQSP) is disordered. The region spanning 150 to 230 (EDEYHVLDLI…RIEITPPPGL (81 aa)) is the PRC barrel domain.

This sequence belongs to the RimM family. In terms of assembly, binds ribosomal protein uS19.

The protein resides in the cytoplasm. Its function is as follows. An accessory protein needed during the final step in the assembly of 30S ribosomal subunit, possibly for assembly of the head region. Essential for efficient processing of 16S rRNA. May be needed both before and after RbfA during the maturation of 16S rRNA. It has affinity for free ribosomal 30S subunits but not for 70S ribosomes. The sequence is that of Ribosome maturation factor RimM from Nostoc punctiforme (strain ATCC 29133 / PCC 73102).